We begin with the raw amino-acid sequence, 714 residues long: Probable metal-nicotianamine transporter YSL5 (714 aa).

Residues 17-44 are disordered; that stretch reads HELQETGFSPETEKVKNKNFEEDEEEED. Positions 27–36 are enriched in basic and acidic residues; that stretch reads ETEKVKNKNF. The next 13 helical transmembrane spans lie at 67–87, 90–110, 135–155, 175–195, 236–256, 295–315, 340–360, 413–433, 445–465, 477–497, 531–551, 593–613, and 631–651; these read AFVVSFMLSILFSFIVMKLNL, GIIPSLNVSAGLLGFFFVKTW, CVVASSGIAFSGGFGTYLFGM, LGWIIGFLFVVSFLGLFSVVP, VLGKFFSLSFFWSFFQWFFTG, IINISVLLGGILSWGIMWPLI, VFIAVAIILGDGLYNFCKVLS, IPTWFAVGGYITIAATSTAIL, ILVIYICAPVLAFCNAYGAGL, LAIFTIGAWAGSEHGGMLAGL, FVSQVIGTAMGCVVSPCVFWL, LVLCYAFFGVAILVNIVKDSL, and FFLGPYFAIDMCVGSLILFIW.

It belongs to the YSL (TC 2.A.67.2) family.

It is found in the membrane. May be involved in the transport of nicotianamine-chelated metals. The protein is Probable metal-nicotianamine transporter YSL5 (YSL5) of Arabidopsis thaliana (Mouse-ear cress).